The primary structure comprises 484 residues: MQVRWAPSDGSLGDYTYQQDMSSSDKLSADDVLNTLDKSNRHILTCILVCGLAWSPLAFTGLCPSFVVKASENSSFIGVADEFDLTGDASWLAESTTTFYMVGNMIGGMFIPPLADHYGRLPVFVATVLLMAVGGMISAFSTSIMMFCIMRMIHGIFYTAAGLAGWVLGYENTPLRLRFFTSVYFGVMWVVGACFLGLLAYILPDWRYLMFCISVPNIFVALLIYMTVPESLHFLVSSQQNEKIEAWLEKIRGPKGDISASDIVEDRDENGSSFKTLCREMWKHKMFIVYVLVMTYIWIVDTFIYFGLAFYSTNLAGNLYLNFVLMSLVEAPAYIFSPIFMNKYGRKVLISGTHIIAGLSFLGIVLSSEAWHIHFWLLGKFAISCSFMSIYMFASEIFPTDGRNKCIGFCETLSRFGGMLSPYLSHLTAVHALAPAITLSLIAVSGGLLTLILPETLNTKLPSTIAETASRRQLIDDKSDSSSN.

11 helical membrane passes run 43 to 63, 95 to 115, 121 to 141, 144 to 164, 183 to 203, 208 to 228, 286 to 306, 321 to 341, 348 to 368, 373 to 393, and 433 to 453; these read ILTC…TGLC, STTT…PPLA, LPVF…SAFS, IMMF…AGLA, VYFG…AYIL, YLMF…YMTV, MFIV…FIYF, LNFV…PIFM, VLIS…VLSS, IHFW…IYMF, and LAPA…TLIL.

This sequence belongs to the major facilitator superfamily. Sugar transporter (TC 2.A.1.1) family.

Its subcellular location is the membrane. This chain is Putative transporter B0252.3, found in Caenorhabditis elegans.